The sequence spans 605 residues: Solute carrier family 23 member 1 (605 aa).

Positions M1 to L30 are disordered. At M1–Y59 the chain is on the cytoplasmic side. A helical transmembrane segment spans residues L60–G80. Residues R81 to Q88 lie on the Extracellular side of the membrane. A helical membrane pass occupies residues L89 to I109. R110 is a topological domain (cytoplasmic). A helical transmembrane segment spans residues L111–L131. The Extracellular segment spans residues E132–A166. N-linked (GlcNAc...) asparagine glycosylation is found at N145 and N151. Residues I167–L187 traverse the membrane as a helical segment. Over S188–A214 the chain is Cytoplasmic. The chain crosses the membrane as a helical span at residues G215–S232. The Extracellular segment spans residues Q233 to R236. Positions N237–G250 form an intramembrane region, helical. The Extracellular portion of the chain corresponds to L251 to Q257. A helical transmembrane segment spans residues I258–L278. Residues T279–G319 lie on the Cytoplasmic side of the membrane. Residues L320–I340 form a helical membrane-spanning segment. Over E341–R365 the chain is Extracellular. A helical transmembrane segment spans residues G366–S386. Topologically, residues T387–Y409 are cytoplasmic. A helical membrane pass occupies residues G410–L430. Residues P431–P433 lie on the Extracellular side of the membrane. A helical membrane pass occupies residues I434–L454. The Cytoplasmic segment spans residues Q455 to N464. The helical transmembrane segment at L465–N485 threads the bilayer. At P486 to D497 the chain is on the extracellular side. The helical transmembrane segment at Q498–L518 threads the bilayer. The Cytoplasmic segment spans residues D519 to V605. Position 598 is a phosphothreonine (T598). Position 600 is a phosphoserine (S600). A Phosphothreonine modification is found at T603.

The protein belongs to the nucleobase:cation symporter-2 (NCS2) (TC 2.A.40) family. Post-translationally, phosphorylated. As to expression, expressed in kidney (at protein level).

Its subcellular location is the cell membrane. It catalyses the reaction L-ascorbate(out) + 2 Na(+)(out) = L-ascorbate(in) + 2 Na(+)(in). The catalysed reaction is urate(out) + 2 Na(+)(out) = urate(in) + 2 Na(+)(in). Sodium:L-ascorbate cotransporter. Mediates electrogenic uptake of vitamin C, with a stoichiometry of 2 Na(+) for each L-ascorbate. Has retained some ancestral activity toward nucleobases such as urate, an oxidized purine. Low-affinity high-capacity sodium:urate cotransporter, may regulate serum urate levels by serving as a renal urate re-absorber. The polypeptide is Solute carrier family 23 member 1 (Slc23a1) (Mus musculus (Mouse)).